The sequence spans 350 residues: Flap endonuclease 1 (350 aa).

Residues 1–102 (MGVNLKDLIP…KEIEKRRKIR (102 aa)) form an N-domain region. Residues aspartate 31, aspartate 84, glutamate 156, glutamate 158, aspartate 177, aspartate 179, and aspartate 240 each coordinate Mg(2+). Residues 120-262 (AARRYAMMSA…KALQLVKAYK (143 aa)) form an I-domain region. The tract at residues 341 to 349 (KQLGLEAWF) is interaction with PCNA.

This sequence belongs to the XPG/RAD2 endonuclease family. FEN1 subfamily. As to quaternary structure, interacts with PCNA. PCNA stimulates the nuclease activity without altering cleavage specificity. Mg(2+) is required as a cofactor.

Functionally, structure-specific nuclease with 5'-flap endonuclease and 5'-3' exonuclease activities involved in DNA replication and repair. During DNA replication, cleaves the 5'-overhanging flap structure that is generated by displacement synthesis when DNA polymerase encounters the 5'-end of a downstream Okazaki fragment. Binds the unpaired 3'-DNA end and kinks the DNA to facilitate 5' cleavage specificity. Cleaves one nucleotide into the double-stranded DNA from the junction in flap DNA, leaving a nick for ligation. Also involved in the base excision repair (BER) pathway. Acts as a genome stabilization factor that prevents flaps from equilibrating into structures that lead to duplications and deletions. Also possesses 5'-3' exonuclease activity on nicked or gapped double-stranded DNA. This is Flap endonuclease 1 from Staphylothermus marinus (strain ATCC 43588 / DSM 3639 / JCM 9404 / F1).